A 266-amino-acid chain; its full sequence is Apolipoprotein A-I (266 aa).

A signal peptide spans 1-18 (MKAALLTLAVLFLTGSQA). 2 repeat units span residues 67–88 (LKLL…EQIG) and 89–110 (PVTQ…QEMS). The interval 67–266 (LKLLDNWDSL…DEATKKLNAQ (200 aa)) is 10 X approximate tandem repeats. Methionine 109 carries the post-translational modification Methionine sulfoxide. The 3; half-length repeat unit spans residues 111 to 121 (KDLEEVKQKVQ). 5 consecutive repeat copies span residues 122–143 (PYLD…QKVA), 144–165 (PLGS…EKLS), 166–187 (PLAE…AQLA), 188–209 (PYSD…EGGG), and 210–231 (ASLA…EKAR). A 9; half-length repeat occupies 232-242 (PALEDLRQGLL). Repeat 10 spans residues 243 to 266 (PVLESFKVSLLAAIDEATKKLNAQ).

The protein belongs to the apolipoprotein A1/A4/E family. Homodimer. Interacts with APOA1BP and CLU. Component of a sperm activating protein complex (SPAP), consisting of APOA1, an immunoglobulin heavy chain, an immunoglobulin light chain and albumin. Interacts with NDRG1. Interacts with SCGB3A2. Interacts with NAXE and YJEFN3. In terms of processing, palmitoylated. Post-translationally, glycosylated. Phosphorylation sites are present in the extracellular medium. In terms of tissue distribution, major protein of plasma HDL, also found in chylomicrons. Synthesized in the liver and small intestine.

The protein localises to the secreted. Its function is as follows. Participates in the reverse transport of cholesterol from tissues to the liver for excretion by promoting cholesterol efflux from tissues and by acting as a cofactor for the lecithin cholesterol acyltransferase (LCAT). As part of the SPAP complex, activates spermatozoa motility. The protein is Apolipoprotein A-I (APOA1) of Canis lupus familiaris (Dog).